The sequence spans 259 residues: Ribonuclease HII (259 aa).

The disordered stretch occupies residues 1 to 26 (MLSTPPKLPSAHGPVHFPRRSGTGMN). One can recognise an RNase H type-2 domain in the interval 55–243 (APVAGADEAG…VRAQQLVLFE (189 aa)). Residues D61, E62, and D152 each coordinate a divalent metal cation.

It belongs to the RNase HII family. The cofactor is Mn(2+). Requires Mg(2+) as cofactor.

Its subcellular location is the cytoplasm. The enzyme catalyses Endonucleolytic cleavage to 5'-phosphomonoester.. Functionally, endonuclease that specifically degrades the RNA of RNA-DNA hybrids. This Azorhizobium caulinodans (strain ATCC 43989 / DSM 5975 / JCM 20966 / LMG 6465 / NBRC 14845 / NCIMB 13405 / ORS 571) protein is Ribonuclease HII.